The chain runs to 84 residues: Small ribosomal subunit protein uS17 (84 aa).

The protein belongs to the universal ribosomal protein uS17 family. Part of the 30S ribosomal subunit.

Functionally, one of the primary rRNA binding proteins, it binds specifically to the 5'-end of 16S ribosomal RNA. The chain is Small ribosomal subunit protein uS17 from Hamiltonella defensa subsp. Acyrthosiphon pisum (strain 5AT).